A 210-amino-acid chain; its full sequence is Inner membrane-spanning protein YciB (210 aa).

Helical transmembrane passes span 12-32, 53-73, 78-98, 115-135, 148-168, and 175-195; these read EVSP…FFFA, IFIA…ASWI, LPMM…LTLW, LFGA…GYVF, KLTI…EVIW, and FWVA…TLAQ.

It belongs to the YciB family.

Its subcellular location is the cell inner membrane. In terms of biological role, plays a role in cell envelope biogenesis, maintenance of cell envelope integrity and membrane homeostasis. In Rhizobium meliloti (strain 1021) (Ensifer meliloti), this protein is Inner membrane-spanning protein YciB.